The following is a 147-amino-acid chain: Hemoglobin subunit gamma (147 aa).

The Globin domain occupies 3 to 147; the sequence is NFTAEDKAAI…VASALASRYH (145 aa). Heme b contacts are provided by His-64 and His-93.

This sequence belongs to the globin family. In terms of assembly, heterotetramer of two alpha chains and two gamma chains in fetal hemoglobin (Hb F). Red blood cells.

Gamma chains make up the fetal hemoglobin F, in combination with alpha chains. The sequence is that of Hemoglobin subunit gamma (HBG1) from Callithrix jacchus (White-tufted-ear marmoset).